Reading from the N-terminus, the 202-residue chain is Small ribosomal subunit protein uS4c (202 aa).

The S4 RNA-binding domain maps to 90–159; the sequence is MRLDNIIFRL…TKNYEFSQTY (70 aa).

It belongs to the universal ribosomal protein uS4 family. Part of the 30S ribosomal subunit. Contacts protein S5. The interaction surface between S4 and S5 is involved in control of translational fidelity.

It is found in the plastid. Its subcellular location is the chloroplast. One of the primary rRNA binding proteins, it binds directly to 16S rRNA where it nucleates assembly of the body of the 30S subunit. In terms of biological role, with S5 and S12 plays an important role in translational accuracy. This chain is Small ribosomal subunit protein uS4c (rps4), found in Huperzia lucidula (Shining clubmoss).